The chain runs to 469 residues: ATP synthase subunit beta (469 aa).

155–162 serves as a coordination point for ATP; sequence GGAGVGKT.

Belongs to the ATPase alpha/beta chains family. F-type ATPases have 2 components, CF(1) - the catalytic core - and CF(0) - the membrane proton channel. CF(1) has five subunits: alpha(3), beta(3), gamma(1), delta(1), epsilon(1). CF(0) has three main subunits: a(1), b(2) and c(9-12). The alpha and beta chains form an alternating ring which encloses part of the gamma chain. CF(1) is attached to CF(0) by a central stalk formed by the gamma and epsilon chains, while a peripheral stalk is formed by the delta and b chains.

It localises to the cell inner membrane. It catalyses the reaction ATP + H2O + 4 H(+)(in) = ADP + phosphate + 5 H(+)(out). Its function is as follows. Produces ATP from ADP in the presence of a proton gradient across the membrane. The catalytic sites are hosted primarily by the beta subunits. The chain is ATP synthase subunit beta from Helicobacter pylori (strain ATCC 700392 / 26695) (Campylobacter pylori).